The primary structure comprises 359 residues: E3 ubiquitin-protein ligase RNF146 (359 aa).

The RING-type zinc-finger motif lies at 36–74; the sequence is CAICLQTCVHPVSLPCKHVFCYLCVKGASWLGKRCALCR. Glycyl lysine isopeptide (Lys-Gly) (interchain with G-Cter in ubiquitin) cross-links involve residues lysine 84 and lysine 94. The 77-residue stretch at 91–167 folds into the WWE domain; the sequence is EELKAASRGN…EHGRRRKIKR (77 aa). 3 residues coordinate a glycoprotein: tyrosine 107, arginine 110, and tryptophan 114. Lysine 130 participates in a covalent cross-link: Glycyl lysine isopeptide (Lys-Gly) (interchain with G-Cter in ubiquitin). Tyrosine 144, glutamine 153, arginine 163, and lysine 175 together coordinate a glycoprotein. Lysine 175 participates in a covalent cross-link: Glycyl lysine isopeptide (Lys-Gly) (interchain with G-Cter in ubiquitin). The tract at residues 259 to 359 is disordered; that stretch reads ERSHRGEGEE…PDGQCTVTEV (101 aa). The segment covering 284–298 has biased composition (acidic residues); it reads SVEETESDASSDSED. Phosphoserine occurs at positions 290 and 294. The span at 306 to 322 shows a compositional bias: polar residues; it reads HSLTQQRLLVPNANQTV.

Can form homooligomers. Interacts with PARsylated AXIN1, AXIN2, BLZF1, CASC3, H1-2, IPO7, LIG3, NCL, PARP1, XRCC1, XRCC5 and XRCC6. Interacts with DDB1, DHX15, IQGAP1, LRPPRC, PARP2, PRKDC, RUVBL2, TNKS1 and TNKS2. Binding often leads to interactor ubiquitination, in the presence of the appropriate E1 and E2 enzymes, and proteasomal degradation. In terms of processing, ubiquitinated; autoubiquitinated. Autoubiquitination is enhanced upon poly(ADP-ribose)-binding.

Its subcellular location is the cytoplasm. It is found in the cytosol. The protein resides in the nucleus. The catalysed reaction is S-ubiquitinyl-[E2 ubiquitin-conjugating enzyme]-L-cysteine + [acceptor protein]-L-lysine = [E2 ubiquitin-conjugating enzyme]-L-cysteine + N(6)-ubiquitinyl-[acceptor protein]-L-lysine.. It participates in protein modification; protein ubiquitination. Its function is as follows. E3 ubiquitin-protein ligase that specifically binds poly-ADP-ribosylated (PARsylated) proteins and mediates their ubiquitination and subsequent degradation. May regulate many important biological processes, such as cell survival and DNA damage response. Acts as an activator of the Wnt signaling pathway by mediating the ubiquitination of PARsylated AXIN1 and AXIN2, 2 key components of the beta-catenin destruction complex. Acts in cooperation with tankyrase proteins (TNKS and TNKS2), which mediate PARsylation of target proteins AXIN1, AXIN2, BLZF1, CASC3, TNKS and TNKS2. Recognizes and binds tankyrase-dependent PARsylated proteins via its WWE domain and mediates their ubiquitination, leading to their degradation. Different ubiquitin linkage types have been observed: TNKS2 undergoes ubiquitination at 'Lys-48' and 'Lys-63', while AXIN1 is only ubiquitinated at 'Lys-48'. May regulate TNKS and TNKS2 subcellular location, preventing aggregation at a centrosomal location. Neuroprotective protein. Protects the brain against N-methyl-D-aspartate (NMDA) receptor-mediated glutamate excitotoxicity and ischemia, by interfering with PAR-induced cell death, called parthanatos. Prevents nuclear translocation of AIFM1 in a PAR-binding dependent manner. Does not affect PARP1 activation. Protects against cell death induced by DNA damaging agents, such as N-methyl-N-nitro-N-nitrosoguanidine (MNNG) and rescues cells from G1 arrest. Promotes cell survival after gamma-irradiation. Facilitates DNA repair. This chain is E3 ubiquitin-protein ligase RNF146 (RNF146), found in Ailuropoda melanoleuca (Giant panda).